Reading from the N-terminus, the 322-residue chain is N-acetyl-gamma-glutamyl-phosphate reductase (322 aa).

The active site involves Cys-132.

It belongs to the NAGSA dehydrogenase family. Type 1 subfamily.

It is found in the cytoplasm. It catalyses the reaction N-acetyl-L-glutamate 5-semialdehyde + phosphate + NADP(+) = N-acetyl-L-glutamyl 5-phosphate + NADPH + H(+). The protein operates within amino-acid biosynthesis; L-arginine biosynthesis; N(2)-acetyl-L-ornithine from L-glutamate: step 3/4. Functionally, catalyzes the NADPH-dependent reduction of N-acetyl-5-glutamyl phosphate to yield N-acetyl-L-glutamate 5-semialdehyde. The polypeptide is N-acetyl-gamma-glutamyl-phosphate reductase (Bacteroides thetaiotaomicron (strain ATCC 29148 / DSM 2079 / JCM 5827 / CCUG 10774 / NCTC 10582 / VPI-5482 / E50)).